The chain runs to 367 residues: METRAPYVLIGTFVLAAILAVFGFIYWLNNTGGIGPRTNYHVQFQGPVPGLLVGAGVLFNGIRVGEVAQLGLAPDNPRFVNATISVASATPVRADTRVGLDFQGLTGVPVVTLEGGMIVAKSGEPLTLIAEAGAGQSMTQAARDALRRVDSVLEDNSGPLKDTIANFKTFSDGLARNTGKLDGILAGLEKMTGGGAPAQKITYDLRTPQNLGPAAKTLSASLAIPEPTAVAMLQTQRMLFAPVGDNPGFADFLWADSIPKLVQARLIDSFENYDIAHAPLRTSDLGQADYQLLIDIRRFRIATDGETRVEIGLSARIVDKNGKVVASRLVETSEKLDKVEPAAAVAAFDAAFARIAKELIGWTVLAV.

Residues 8-28 (VLIGTFVLAAILAVFGFIYWL) traverse the membrane as a helical segment.

The protein localises to the membrane. This is an uncharacterized protein from Bradyrhizobium diazoefficiens (strain JCM 10833 / BCRC 13528 / IAM 13628 / NBRC 14792 / USDA 110).